A 461-amino-acid polypeptide reads, in one-letter code: Trimethylamine monooxygenase (461 aa).

Residues Ser-14, Glu-39, Lys-40, Gln-41, Met-47, Trp-48, and His-64 each contribute to the FAD site. Residues Trp-72 and Asn-74 each contribute to the NADP(+) site. The FAD site is built by Asn-74 and Ala-127. Residues Ser-206, Ser-207, Ser-209, Arg-230, and Thr-231 each coordinate NADP(+). Residues Gln-319 and Thr-322 each coordinate FAD. Residue Arg-413 participates in NADP(+) binding.

Belongs to the FMO family. The cofactor is FAD.

It carries out the reaction trimethylamine + NADPH + O2 = trimethylamine N-oxide + NADP(+) + H2O. Catalyzes the oxidation of trimethylamine (TMA) to produce trimethylamine N-oxide (TMAO). The produced TMAO is accumulated in the cell, functioning as a piezolyte, improving both growth and survival at high hydrostatic pressure (HHP). The protein is Trimethylamine monooxygenase of Myroides profundi.